Consider the following 290-residue polypeptide: Serine protease 27 (290 aa).

The first 22 residues, 1 to 22, serve as a signal peptide directing secretion; it reads MRRPAAVPLLLLLCFGSQRAKA. A propeptide spans 23 to 34 (activation peptide); the sequence is ATACGRPRMLNR. A Peptidase S1 domain is found at 35 to 277; the sequence is MVGGQDTQEG…HHNWIHRIIP (243 aa). A glycan (N-linked (GlcNAc...) asparagine) is linked at asparagine 55. A disulfide bond links cysteine 60 and cysteine 76. Histidine 75 acts as the Charge relay system in catalysis. A glycan (N-linked (GlcNAc...) asparagine) is linked at asparagine 79. Aspartate 124 serves as the catalytic Charge relay system. 3 disulfides stabilise this stretch: cysteine 158-cysteine 235, cysteine 191-cysteine 214, and cysteine 225-cysteine 253. Serine 229 acts as the Charge relay system in catalysis.

Belongs to the peptidase S1 family. In terms of processing, N-glycosylated. Expressed predominantly in the pancreas.

It is found in the secreted. The protein is Serine protease 27 (PRSS27) of Homo sapiens (Human).